Reading from the N-terminus, the 299-residue chain is Acetylglutamate kinase (299 aa).

Substrate is bound by residues 68–69 (GG), Arg90, and Asn194.

The protein belongs to the acetylglutamate kinase family. ArgB subfamily.

The protein resides in the cytoplasm. It catalyses the reaction N-acetyl-L-glutamate + ATP = N-acetyl-L-glutamyl 5-phosphate + ADP. Its pathway is amino-acid biosynthesis; L-arginine biosynthesis; N(2)-acetyl-L-ornithine from L-glutamate: step 2/4. Functionally, catalyzes the ATP-dependent phosphorylation of N-acetyl-L-glutamate. The sequence is that of Acetylglutamate kinase from Psychrobacter cryohalolentis (strain ATCC BAA-1226 / DSM 17306 / VKM B-2378 / K5).